Reading from the N-terminus, the 224-residue chain is UPF0758 protein PLES_57141 (224 aa).

One can recognise an MPN domain in the interval Ile102–Leu224. Zn(2+) contacts are provided by His173, His175, and Asp186. Positions His173 to Asp186 match the JAMM motif motif.

It belongs to the UPF0758 family.

In Pseudomonas aeruginosa (strain LESB58), this protein is UPF0758 protein PLES_57141.